Consider the following 188-residue polypeptide: GTP-dependent dephospho-CoA kinase (188 aa).

GTP contacts are provided by D43, V44, D62, E121, and D144.

The protein belongs to the GTP-dependent DPCK family.

It catalyses the reaction 3'-dephospho-CoA + GTP = GDP + CoA + H(+). The protein operates within cofactor biosynthesis; coenzyme A biosynthesis. In terms of biological role, catalyzes the GTP-dependent phosphorylation of the 3'-hydroxyl group of dephosphocoenzyme A to form coenzyme A (CoA). The protein is GTP-dependent dephospho-CoA kinase of Methanococcoides burtonii (strain DSM 6242 / NBRC 107633 / OCM 468 / ACE-M).